A 315-amino-acid polypeptide reads, in one-letter code: Archaeosortase A (315 aa).

A run of 7 helical transmembrane segments spans residues 12 to 32, 47 to 67, 74 to 94, 173 to 193, 204 to 224, 227 to 247, and 260 to 280; these read VIPY…AGVA, AGAW…FAFV, TVLI…VFAG, VVFE…IAAV, IALS…FIAL, GYQW…FGLT, and VLAQ…IARW. Residue C177 is the Acyl-thioester intermediate of the active site. R218 acts as the Proton donor in catalysis.

The protein belongs to the exosortase/archaeosortase family. Archaeosortase A subfamily.

It localises to the cell membrane. Functionally, transpeptidase that recognizes and modifies its substrate by proteolytic cleavage of a sorting signal. Following cleavage, a covalent intermediate is formed via a thioester bond between the archaeosortase and its substrate, which is then transferred and covalently attached to the cell membrane. The chain is Archaeosortase A from Natronomonas pharaonis (strain ATCC 35678 / DSM 2160 / CIP 103997 / JCM 8858 / NBRC 14720 / NCIMB 2260 / Gabara) (Halobacterium pharaonis).